We begin with the raw amino-acid sequence, 257 residues long: MSYHTIRYEISEGLAVITLDRPEVMNALNAAMRHELTAALHRARGEARAIVLTGSGRAFCSGQDLGDGAAEGLNLETVLREEYEPLLQAIYSCPLPVLAAVNGAAAGAGANLALAADVVIAAQSAAFMQAFTRIGLMPDAGGTWWLPRQVGMARAMGMALFAEKIGAEEAARMGLIWEAVPDVDFEHHWRARAAHLARGPSAAFAAVKKAFHAGLSNPLPAQLALEARLQGELGQSADFREGVQAFLEKRPPHFTGR.

Belongs to the enoyl-CoA hydratase/isomerase family.

It catalyses the reaction a (3S)-3-hydroxyacyl-CoA = a (2E)-enoyl-CoA + H2O. The enzyme catalyses a 4-saturated-(3S)-3-hydroxyacyl-CoA = a (3E)-enoyl-CoA + H2O. Its function is as follows. Could possibly oxidize fatty acids using specific components. In Rhodobacter capsulatus (strain ATCC BAA-309 / NBRC 16581 / SB1003), this protein is Probable enoyl-CoA hydratase (fadB1).